We begin with the raw amino-acid sequence, 492 residues long: Glutamyl-tRNA(Gln) amidotransferase subunit A (492 aa).

Catalysis depends on charge relay system residues lysine 81 and serine 156. Serine 180 acts as the Acyl-ester intermediate in catalysis.

Belongs to the amidase family. GatA subfamily. Heterotrimer of A, B and C subunits.

The enzyme catalyses L-glutamyl-tRNA(Gln) + L-glutamine + ATP + H2O = L-glutaminyl-tRNA(Gln) + L-glutamate + ADP + phosphate + H(+). Functionally, allows the formation of correctly charged Gln-tRNA(Gln) through the transamidation of misacylated Glu-tRNA(Gln) in organisms which lack glutaminyl-tRNA synthetase. The reaction takes place in the presence of glutamine and ATP through an activated gamma-phospho-Glu-tRNA(Gln). The chain is Glutamyl-tRNA(Gln) amidotransferase subunit A from Rhodococcus erythropolis (strain PR4 / NBRC 100887).